The chain runs to 751 residues: Photosystem I P700 chlorophyll a apoprotein A1 (751 aa).

The next 8 membrane-spanning stretches (helical) occupy residues 73–96, 159–182, 198–222, 294–312, 349–372, 388–414, 436–458, and 533–551; these read VFSA…FHGA, LYIT…FHYH, LNHH…HVSL, VAHH…GHMY, WHAQ…QHMY, LSLF…IFMV, AIIS…LYIH, and FLVH…LILL. Residues Cys-575 and Cys-584 each coordinate [4Fe-4S] cluster. 2 consecutive transmembrane segments (helical) span residues 591–612 and 665–687; these read HVFL…HFSW and LSAY…MFLF. A chlorophyll a'-binding site is contributed by His-676. Chlorophyll a contacts are provided by Met-684 and Tyr-692. Trp-693 provides a ligand contact to phylloquinone. Residues 725-745 traverse the membrane as a helical segment; that stretch reads AVGVAHYLLGGIATTWSFFLA.

The protein belongs to the PsaA/PsaB family. In terms of assembly, the PsaA/B heterodimer binds the P700 chlorophyll special pair and subsequent electron acceptors. PSI consists of a core antenna complex that captures photons, and an electron transfer chain that converts photonic excitation into a charge separation. The eukaryotic PSI reaction center is composed of at least 11 subunits. It depends on P700 is a chlorophyll a/chlorophyll a' dimer, A0 is one or more chlorophyll a, A1 is one or both phylloquinones and FX is a shared 4Fe-4S iron-sulfur center. as a cofactor.

It localises to the plastid. It is found in the chloroplast thylakoid membrane. The catalysed reaction is reduced [plastocyanin] + hnu + oxidized [2Fe-2S]-[ferredoxin] = oxidized [plastocyanin] + reduced [2Fe-2S]-[ferredoxin]. Functionally, psaA and PsaB bind P700, the primary electron donor of photosystem I (PSI), as well as the electron acceptors A0, A1 and FX. PSI is a plastocyanin/cytochrome c6-ferredoxin oxidoreductase, converting photonic excitation into a charge separation, which transfers an electron from the donor P700 chlorophyll pair to the spectroscopically characterized acceptors A0, A1, FX, FA and FB in turn. Oxidized P700 is reduced on the lumenal side of the thylakoid membrane by plastocyanin or cytochrome c6. This Euglena gracilis protein is Photosystem I P700 chlorophyll a apoprotein A1.